A 255-amino-acid chain; its full sequence is Chlorocatechol 1,2-dioxygenase (255 aa).

The Fe cation site is built by Tyr-130, Tyr-164, His-188, and His-190.

Belongs to the intradiol ring-cleavage dioxygenase family. The cofactor is Fe(3+).

It catalyses the reaction 3,5-dichlorocatechol + O2 = (2E,4E)-2,4-dichloromuconate + 2 H(+). It functions in the pathway aromatic compound metabolism; 3-chlorocatechol degradation. Preferentially converts 3,5-dichlorocatechol as opposed to other chlorinated catechols. Retains diminished activity toward non-chlorinated substrates. This is Chlorocatechol 1,2-dioxygenase (tfdC) from Burkholderia cepacia (Pseudomonas cepacia).